Reading from the N-terminus, the 1487-residue chain is Major viral transcription factor ICP4 homolog (1487 aa).

3 disordered regions span residues 41–295 (AAPD…LPPG), 310–370 (LAKT…AEEA), and 803–1007 (PPTR…HTPR). Residues 66 to 75 (VIPPPSPAPE) are compositionally biased toward pro residues. Composition is skewed to low complexity over residues 165-193 (PSSA…SSSS) and 201-213 (DGAG…SSSS). Acidic residues predominate over residues 214–224 (DDSDSDEGGEE). A compositionally biased stretch (low complexity) spans 235–272 (AAKTPSAAGSPGPSSGGDRPAAGAATPKSCRSGAASPG). The span at 273–285 (APAPAPASAPAPS) shows a compositional bias: pro residues. Composition is skewed to low complexity over residues 807–829 (SQQP…AEGS), 849–860 (PSSHSQSPQHSQ), and 867–877 (ATTATCCRATQ). Residues 878–893 (TNARSRGQQHQPQKAR) show a composition bias toward polar residues. Basic residues predominate over residues 920-929 (HGRPRGKSGK). A compositionally biased stretch (low complexity) spans 938 to 951 (AAQAGASASFSSSA). Residues 988–1007 (GPDRRGGFRRVPRGDCHTPR) show a composition bias toward basic and acidic residues.

It belongs to the herpesviridae ICP4 family. Post-translationally, a long stretch of serine residues may be a major site of phosphorylation.

The protein resides in the host nucleus. Its function is as follows. This IE protein is a multifunctional protein capable of migrating to the nucleus, binding to DNA, trans-activating other viral genes, and autoregulating its own synthesis. This Equus caballus (Horse) protein is Major viral transcription factor ICP4 homolog (IE).